A 1199-amino-acid chain; its full sequence is Putative pyruvate-flavodoxin oxidoreductase (1199 aa).

4Fe-4S ferredoxin-type domains follow at residues 681–710 (EIPVWDPDVCVQCGKCVIVCPHAVIRGKVY) and 737–766 (FTIQVAPEDCTGCGICVDVCPAKNKSQPRL). [4Fe-4S] cluster is bound by residues cysteine 690, cysteine 693, cysteine 696, cysteine 700, cysteine 746, cysteine 749, cysteine 752, cysteine 756, cysteine 820, cysteine 823, cysteine 848, and cysteine 1079.

The protein belongs to the pyruvate:ferredoxin/flavodoxin oxidoreductase family. [4Fe-4S] cluster is required as a cofactor.

The enzyme catalyses oxidized [flavodoxin] + pyruvate + CoA + 2 H(+) = reduced [flavodoxin] + acetyl-CoA + CO2. Its function is as follows. Oxidoreductase required for the transfer of electrons from pyruvate to flavodoxin. This chain is Putative pyruvate-flavodoxin oxidoreductase (nifJ), found in Synechocystis sp. (strain ATCC 27184 / PCC 6803 / Kazusa).